Here is a 207-residue protein sequence, read N- to C-terminus: Dephospho-CoA kinase (207 aa).

In terms of domain architecture, DPCK spans 5–203 (AVGLTGGVAC…ARYRALASVF (199 aa)). 13 to 18 (ACGKSL) serves as a coordination point for ATP.

The protein belongs to the CoaE family.

Its subcellular location is the cytoplasm. It carries out the reaction 3'-dephospho-CoA + ATP = ADP + CoA + H(+). It functions in the pathway cofactor biosynthesis; coenzyme A biosynthesis; CoA from (R)-pantothenate: step 5/5. In terms of biological role, catalyzes the phosphorylation of the 3'-hydroxyl group of dephosphocoenzyme A to form coenzyme A. This is Dephospho-CoA kinase from Xylella fastidiosa (strain Temecula1 / ATCC 700964).